The sequence spans 411 residues: Glutamyl-tRNA reductase (411 aa).

Substrate-binding positions include 49-52 (TCNR), Ser99, 104-106 (ENE), and Gln110. The active-site Nucleophile is the Cys50. 179-184 (GAGEAG) serves as a coordination point for NADP(+).

Belongs to the glutamyl-tRNA reductase family. As to quaternary structure, homodimer.

It catalyses the reaction (S)-4-amino-5-oxopentanoate + tRNA(Glu) + NADP(+) = L-glutamyl-tRNA(Glu) + NADPH + H(+). The protein operates within porphyrin-containing compound metabolism; protoporphyrin-IX biosynthesis; 5-aminolevulinate from L-glutamyl-tRNA(Glu): step 1/2. Its function is as follows. Catalyzes the NADPH-dependent reduction of glutamyl-tRNA(Glu) to glutamate 1-semialdehyde (GSA). This chain is Glutamyl-tRNA reductase, found in Hyperthermus butylicus (strain DSM 5456 / JCM 9403 / PLM1-5).